The following is a 228-amino-acid chain: uncharacterized protein (228 aa).

A disordered region spans residues 194-228 (SRRADEHPAPSTEPHAAAVAPEPDFMAEPIPALEE).

This is an uncharacterized protein from Treponema pallidum (strain Nichols).